Here is an 83-residue protein sequence, read N- to C-terminus: Putative defensin-like protein 66 (83 aa).

The N-terminal stretch at 1-22 (MGSSRLMITFIVVAMLAISSDL) is a signal peptide. 4 disulfides stabilise this stretch: cysteine 38–cysteine 82, cysteine 42–cysteine 65, cysteine 51–cysteine 80, and cysteine 55–cysteine 81.

The protein belongs to the DEFL family.

It is found in the secreted. This Arabidopsis thaliana (Mouse-ear cress) protein is Putative defensin-like protein 66.